The chain runs to 426 residues: D-tagatose-1,6-bisphosphate aldolase subunit KbaZ (426 aa).

This sequence belongs to the GatZ/KbaZ family. KbaZ subfamily. As to quaternary structure, forms a complex with KbaY.

Its pathway is carbohydrate metabolism; D-tagatose 6-phosphate degradation; D-glyceraldehyde 3-phosphate and glycerone phosphate from D-tagatose 6-phosphate: step 2/2. Component of the tagatose-1,6-bisphosphate aldolase KbaYZ that is required for full activity and stability of the Y subunit. Could have a chaperone-like function for the proper and stable folding of KbaY. When expressed alone, KbaZ does not show any aldolase activity. In Escherichia coli O127:H6 (strain E2348/69 / EPEC), this protein is D-tagatose-1,6-bisphosphate aldolase subunit KbaZ.